The chain runs to 115 residues: Parathyroid hormone (115 aa).

A signal peptide spans 1-25 (MMSAKDMVKVMIVMLAICFLARSDG). Residues 26–31 (KSVKKR) constitute a propeptide that is removed on maturation. The tract at residues 51–69 (RVEWLRKKLQDVHNFVALG) is important for receptor binding. Residues 77-99 (GSSQRPRKKEDNVLVESHQKSLG) are disordered. Over residues 84–99 (KKEDNVLVESHQKSLG) the composition is skewed to basic and acidic residues.

It belongs to the parathyroid hormone family. Interacts with PTH1R (via N-terminal extracellular domain).

The protein resides in the secreted. Parathyroid hormone elevates calcium level by dissolving the salts in bone and preventing their renal excretion. Acts by binding to its receptor, PTH1R, activating G protein-coupled receptor signaling. Stimulates [1-14C]-2-deoxy-D-glucose (2DG) transport and glycogen synthesis in osteoblastic cells. This chain is Parathyroid hormone, found in Bos taurus (Bovine).